The following is an 81-amino-acid chain: MATITDLLNDLKIDLGNESLQNVLENYLEELEQANAAVPIILGRMNIDISTAIRKDGVTLSEIQSKKLKELISISYIKYGY.

This is an uncharacterized protein from Carnobacterium maltaromaticum (Carnobacterium piscicola).